Consider the following 118-residue polypeptide: Holo-[acyl-carrier-protein] synthase (118 aa).

Mg(2+)-binding residues include Asp8 and Glu58.

The protein belongs to the P-Pant transferase superfamily. AcpS family. It depends on Mg(2+) as a cofactor.

The protein localises to the cytoplasm. It carries out the reaction apo-[ACP] + CoA = holo-[ACP] + adenosine 3',5'-bisphosphate + H(+). Its function is as follows. Transfers the 4'-phosphopantetheine moiety from coenzyme A to a Ser of acyl-carrier-protein. The chain is Holo-[acyl-carrier-protein] synthase from Streptococcus equi subsp. zooepidemicus (strain H70).